Here is a 146-residue protein sequence, read N- to C-terminus: MSINIDIKKITDLLNSSILFPDDVQELLREKYIVLERKSNGTPTVAHIYKTMARFDNKSIYRIAKFLFMNRPDVIKLLFLEDVEPLLPDKSINISINNTEYPQLEGPIGTKIALLELFNAFKTGISEPIPYYYLPLRKDINNIVTK.

It belongs to the orthopoxvirus OPG114 family. As to quaternary structure, part of a complex composed of the kinase OPG054, OPG092, OPG100, OPG114, OPG115, OPG142 and OPG157.

It localises to the virion. Its function is as follows. Late protein which is part of a large complex required for early virion morphogenesis. This complex participates in the formation of virosomes and the incorporation of virosomal contents into nascent immature virions. The sequence is that of Core protein D2 (OPG114) from Homo sapiens (Human).